We begin with the raw amino-acid sequence, 113 residues long: Large ribosomal subunit protein uL22 (113 aa).

This sequence belongs to the universal ribosomal protein uL22 family. Part of the 50S ribosomal subunit.

This protein binds specifically to 23S rRNA; its binding is stimulated by other ribosomal proteins, e.g. L4, L17, and L20. It is important during the early stages of 50S assembly. It makes multiple contacts with different domains of the 23S rRNA in the assembled 50S subunit and ribosome. Its function is as follows. The globular domain of the protein is located near the polypeptide exit tunnel on the outside of the subunit, while an extended beta-hairpin is found that lines the wall of the exit tunnel in the center of the 70S ribosome. The sequence is that of Large ribosomal subunit protein uL22 from Syntrophomonas wolfei subsp. wolfei (strain DSM 2245B / Goettingen).